The following is a 463-amino-acid chain: Putative dipeptidase YtjP (463 aa).

Histidine 85 provides a ligand contact to Zn(2+). The active site involves aspartate 87. Aspartate 116 lines the Zn(2+) pocket. The Proton acceptor role is filled by glutamate 150. Residues glutamate 151, aspartate 174, and histidine 436 each coordinate Zn(2+).

Belongs to the peptidase M20A family. Requires Zn(2+) as cofactor.

The sequence is that of Putative dipeptidase YtjP (ytjP) from Bacillus subtilis (strain 168).